The sequence spans 247 residues: LHFPL tetraspan subfamily member 4 protein (247 aa).

The next 4 membrane-spanning stretches (helical) occupy residues 22-42 (IGVL…VVFI), 97-117 (FFVL…ALFF), 127-147 (ICAW…MIFP), and 178-198 (ILAI…FVLG).

Belongs to the LHFP family. As to quaternary structure, interacts with GABA(A) receptor subunits. Interacts with GABRB3. Interacts with GABRA2. Interacts with GABRG2. Identified in a complex of 720 kDa composed of LHFPL4, NLGN2, GABRA1, GABRB2, GABRG2 and GABRB3. Interacts with GABRA1. Interacts with NLGN2; leading to mutual regulation of protein level and synaptic clustering.

It is found in the cell projection. Its subcellular location is the dendrite. The protein localises to the postsynaptic cell membrane. Its function is as follows. Plays a role in the regulation of inhibitory synapse formation and function by being involved in maintening gamma-aminobutyric acid receptors (GABAARs) clustering and their associated scaffold proteins at inhibitory synaptic sites. Acts in concert with NLGN2 to recruit or stabilize GABAARs. This chain is LHFPL tetraspan subfamily member 4 protein, found in Bos taurus (Bovine).